The sequence spans 891 residues: DNA mismatch repair protein MutS (891 aa).

646–653 is a binding site for ATP; it reads GPNMAGKS.

The protein belongs to the DNA mismatch repair MutS family.

This protein is involved in the repair of mismatches in DNA. It is possible that it carries out the mismatch recognition step. This protein has a weak ATPase activity. This is DNA mismatch repair protein MutS from Rickettsia typhi (strain ATCC VR-144 / Wilmington).